The chain runs to 323 residues: 8-oxo-dGDP phosphatase NUDT18 (323 aa).

One can recognise a Nudix hydrolase domain in the interval 37 to 167; that stretch reads RLRKNVCYVV…DILHLVELAA (131 aa). Residue Leu-58 coordinates Mg(2+). The Nudix box motif lies at 76–97; it reads GRMEPGETIVEALQREVKEEAG.

Belongs to the Nudix hydrolase family. The cofactor is Mn(2+). Mg(2+) is required as a cofactor.

It catalyses the reaction 8-oxo-dGDP + H2O = 8-oxo-dGMP + phosphate + H(+). The enzyme catalyses 8-oxo-dADP + H2O = 8-oxo-dAMP + phosphate + H(+). It carries out the reaction 2-oxo-dADP + H2O = 2-oxo-dAMP + phosphate + H(+). The catalysed reaction is 8-oxo-GDP + H2O = 8-oxo-GMP + phosphate + H(+). Its function is as follows. Mediates the hydrolysis of oxidized nucleoside diphosphate derivatives. Hydrolyzes 8-oxo-7,8-dihydroguanine (8-oxo-Gua)-containing deoxyribo- and ribonucleoside diphosphates to the monophosphates. Hydrolyzes 8-oxo-dGDP and 8-oxo-GDP with the same efficiencies. Also hydrolyzes 8-OH-dADP and 2-OH-dADP. Exhibited no or minimal hydrolysis activity against 8-oxo-dGTP, 8-oxo-GTP, dGTP, GTP, dGDP and GDP. Probably removes oxidized guanine nucleotides from both the DNA and RNA precursor pools. In Homo sapiens (Human), this protein is 8-oxo-dGDP phosphatase NUDT18.